We begin with the raw amino-acid sequence, 224 residues long: E3 ubiquitin-protein ligase TRIM48 (224 aa).

The segment at 31 to 72 (CPICMNYFIDPVTIDCGHSFCRPCFYLNWQDIPILTQCFECI) adopts an RING-type zinc-finger fold. Residues 104-145 (SEEQMCGIHRETKKMFCEVDRSLLCLLCSSSQEHRYHRHCPA) form a B box-type zinc finger. Zn(2+)-binding residues include Cys109, His112, Cys131, and His137.

Belongs to the TRIM/RBCC family. As to quaternary structure, interacts with PRMT1; the interaction leads to ubiquitination of PRMT1 by TRIM48. Interacts with MAP3K5. Interacts with STRAP.

The protein localises to the cytoplasm. It localises to the cytosol. It catalyses the reaction S-ubiquitinyl-[E2 ubiquitin-conjugating enzyme]-L-cysteine + [acceptor protein]-L-lysine = [E2 ubiquitin-conjugating enzyme]-L-cysteine + N(6)-ubiquitinyl-[acceptor protein]-L-lysine.. Its function is as follows. E3 ubiquitin-protein ligase which promotes K48-linked polyubiquitination of protein methyltransferase PRMT1, leading to PRMT1 degradation. This suppresses methylation of the PRMT1 substrate MAP3K5/ASK1, promoting its activation and increasing MAP3K5-dependent cell death induced by oxidative stress. TRIM48-mediated ubiquitination of PRMT1 also suppresses methylation of FOXO1 by PRMT1, leading to inhibition of FOXO1 transcriptional activity. The protein is E3 ubiquitin-protein ligase TRIM48 of Homo sapiens (Human).